Consider the following 425-residue polypeptide: Enolase (425 aa).

Residues Thr31–Asp54 are disordered. The segment covering Gly43–Asp54 has biased composition (basic and acidic residues). A (2R)-2-phosphoglycerate-binding site is contributed by Gln162. Glu204 (proton donor) is an active-site residue. Mg(2+)-binding residues include Asp241, Glu285, and Asp312. (2R)-2-phosphoglycerate contacts are provided by Lys337, Arg366, Ser367, and Lys388. The active-site Proton acceptor is Lys337.

It belongs to the enolase family. It depends on Mg(2+) as a cofactor.

The protein resides in the cytoplasm. It is found in the secreted. The protein localises to the cell surface. The catalysed reaction is (2R)-2-phosphoglycerate = phosphoenolpyruvate + H2O. It participates in carbohydrate degradation; glycolysis; pyruvate from D-glyceraldehyde 3-phosphate: step 4/5. Catalyzes the reversible conversion of 2-phosphoglycerate (2-PG) into phosphoenolpyruvate (PEP). It is essential for the degradation of carbohydrates via glycolysis. The sequence is that of Enolase from Gloeobacter violaceus (strain ATCC 29082 / PCC 7421).